Consider the following 170-residue polypeptide: Large ribosomal subunit protein uL5 (170 aa).

The protein belongs to the universal ribosomal protein uL5 family. As to quaternary structure, component of the large ribosomal subunit.

The protein resides in the nucleus. It localises to the cytoplasm. In terms of biological role, component of the ribosome, a large ribonucleoprotein complex responsible for the synthesis of proteins in the cell. The small ribosomal subunit (SSU) binds messenger RNAs (mRNAs) and translates the encoded message by selecting cognate aminoacyl-transfer RNA (tRNA) molecules. The large subunit (LSU) contains the ribosomal catalytic site termed the peptidyl transferase center (PTC), which catalyzes the formation of peptide bonds, thereby polymerizing the amino acids delivered by tRNAs into a polypeptide chain. The nascent polypeptides leave the ribosome through a tunnel in the LSU and interact with protein factors that function in enzymatic processing, targeting, and the membrane insertion of nascent chains at the exit of the ribosomal tunnel. The polypeptide is Large ribosomal subunit protein uL5 (RPL11) (Chlamydomonas reinhardtii (Chlamydomonas smithii)).